A 385-amino-acid polypeptide reads, in one-letter code: 1-deoxy-D-xylulose 5-phosphate reductoisomerase (385 aa).

6 residues coordinate NADPH: Thr-13, Gly-14, Ser-15, Ile-16, Asn-40, and Asn-122. Lys-123 is a 1-deoxy-D-xylulose 5-phosphate binding site. NADPH is bound at residue Glu-124. Asp-148 contacts Mn(2+). 1-deoxy-D-xylulose 5-phosphate is bound by residues Ser-149, Glu-150, Ser-177, and His-200. A Mn(2+)-binding site is contributed by Glu-150. Gly-206 serves as a coordination point for NADPH. Residues Ser-213, Asn-218, Lys-219, and Glu-222 each contribute to the 1-deoxy-D-xylulose 5-phosphate site. Residue Glu-222 coordinates Mn(2+).

Belongs to the DXR family. Mg(2+) is required as a cofactor. Requires Mn(2+) as cofactor.

The enzyme catalyses 2-C-methyl-D-erythritol 4-phosphate + NADP(+) = 1-deoxy-D-xylulose 5-phosphate + NADPH + H(+). The protein operates within isoprenoid biosynthesis; isopentenyl diphosphate biosynthesis via DXP pathway; isopentenyl diphosphate from 1-deoxy-D-xylulose 5-phosphate: step 1/6. Its function is as follows. Catalyzes the NADPH-dependent rearrangement and reduction of 1-deoxy-D-xylulose-5-phosphate (DXP) to 2-C-methyl-D-erythritol 4-phosphate (MEP). The sequence is that of 1-deoxy-D-xylulose 5-phosphate reductoisomerase from Francisella tularensis subsp. novicida (strain U112).